Reading from the N-terminus, the 392-residue chain is Succinyl-diaminopimelate desuccinylase (392 aa).

His-75 contacts Zn(2+). The active site involves Asp-77. Asp-108 is a binding site for Zn(2+). The active-site Proton acceptor is Glu-147. Zn(2+) is bound by residues Glu-148, Glu-176, and His-365.

This sequence belongs to the peptidase M20A family. DapE subfamily. In terms of assembly, homodimer. Zn(2+) is required as a cofactor. It depends on Co(2+) as a cofactor.

It catalyses the reaction N-succinyl-(2S,6S)-2,6-diaminopimelate + H2O = (2S,6S)-2,6-diaminopimelate + succinate. It functions in the pathway amino-acid biosynthesis; L-lysine biosynthesis via DAP pathway; LL-2,6-diaminopimelate from (S)-tetrahydrodipicolinate (succinylase route): step 3/3. Catalyzes the hydrolysis of N-succinyl-L,L-diaminopimelic acid (SDAP), forming succinate and LL-2,6-diaminopimelate (DAP), an intermediate involved in the bacterial biosynthesis of lysine and meso-diaminopimelic acid, an essential component of bacterial cell walls. The protein is Succinyl-diaminopimelate desuccinylase of Rhodopseudomonas palustris (strain BisB18).